The following is a 234-amino-acid chain: Synaptogyrin-4 (234 aa).

Positions 18–169 (FLRRPKTITR…QAYLAFQDLR (152 aa)) constitute an MARVEL domain. Helical transmembrane passes span 25-45 (ITRV…LTDG), 66-86 (CSFA…FLVL), 104-124 (LLDF…FCFL), and 145-165 (AAIA…YLAF).

It belongs to the synaptogyrin family.

The protein resides in the membrane. This is Synaptogyrin-4 (SYNGR4) from Homo sapiens (Human).